Reading from the N-terminus, the 266-residue chain is Type II pantothenate kinase (266 aa).

6–13 (DAGGTLIK) serves as a coordination point for ATP. Glu70 serves as the catalytic Proton acceptor. Residues Thr99, 121–125 (GGMIQ), Tyr137, and Ser225 contribute to the ATP site.

The protein belongs to the type II pantothenate kinase family. In terms of assembly, homodimer.

The protein resides in the cytoplasm. It carries out the reaction (R)-pantothenate + ATP = (R)-4'-phosphopantothenate + ADP + H(+). The protein operates within cofactor biosynthesis; coenzyme A biosynthesis; CoA from (R)-pantothenate: step 1/5. Catalyzes the phosphorylation of pantothenate (Pan), the first step in CoA biosynthesis. The polypeptide is Type II pantothenate kinase (Staphylococcus haemolyticus (strain JCSC1435)).